The following is a 248-amino-acid chain: Probable transcriptional regulatory protein RHECIAT_CH0003714 (248 aa).

The protein belongs to the TACO1 family.

It localises to the cytoplasm. The chain is Probable transcriptional regulatory protein RHECIAT_CH0003714 from Rhizobium etli (strain CIAT 652).